A 351-amino-acid chain; its full sequence is Photosystem II D2 protein 2 (351 aa).

A helical transmembrane segment spans residues 39–59 (CAFLSIGGWFTGTTFVTSWYT). His-116 contacts chlorophyll a. Residues 123-139 (GFMLRQFEIARLVNVRP) traverse the membrane as a helical segment. 2 residues coordinate pheophytin a: Gln-128 and Asn-141. A helical membrane pass occupies residues 151–164 (VFVSVFLMYPLGQS). His-196 is a chlorophyll a binding site. Residues 206–226 (GALLCAIHGATVENTLFEDTK) form a helical membrane-spanning segment. 2 residues coordinate a plastoquinone: His-213 and Phe-260. Position 213 (His-213) interacts with Fe cation. A Fe cation-binding site is contributed by His-267. The helical transmembrane segment at 277–293 (GLWASAIGLVGIALNMR) threads the bilayer.

This sequence belongs to the reaction center PufL/M/PsbA/D family. As to quaternary structure, PSII is composed of 1 copy each of membrane proteins PsbA, PsbB, PsbC, PsbD, PsbE, PsbF, PsbH, PsbI, PsbJ, PsbK, PsbL, PsbM, PsbT, PsbX, PsbY, PsbZ, Psb30/Ycf12, peripheral proteins PsbO, CyanoQ (PsbQ), PsbU, PsbV and a large number of cofactors. It forms dimeric complexes. The D1/D2 heterodimer binds P680, chlorophylls that are the primary electron donor of PSII, and subsequent electron acceptors. It shares a non-heme iron and each subunit binds pheophytin, quinone, additional chlorophylls, carotenoids and lipids. There is also a Cl(-1) ion associated with D1 and D2, which is required for oxygen evolution. The PSII complex binds additional chlorophylls, carotenoids and specific lipids. is required as a cofactor.

The protein resides in the cellular thylakoid membrane. The catalysed reaction is 2 a plastoquinone + 4 hnu + 2 H2O = 2 a plastoquinol + O2. Photosystem II (PSII) is a light-driven water:plastoquinone oxidoreductase that uses light energy to abstract electrons from H(2)O, generating O(2) and a proton gradient subsequently used for ATP formation. It consists of a core antenna complex that captures photons, and an electron transfer chain that converts photonic excitation into a charge separation. The D1/D2 (PsbA/PsbD) reaction center heterodimer binds P680, the primary electron donor of PSII as well as several subsequent electron acceptors. D2 is needed for assembly of a stable PSII complex. The polypeptide is Photosystem II D2 protein 2 (Acaryochloris marina (strain MBIC 11017)).